A 117-amino-acid chain; its full sequence is Reprimo-like protein (117 aa).

The chain crosses the membrane as a helical span at residues 64–84; that stretch reads VAQIAVLCVLSLTVVFGVFFL. S106 carries the post-translational modification Phosphoserine.

This sequence belongs to the reprimo family.

It localises to the membrane. The polypeptide is Reprimo-like protein (Rprml) (Mus musculus (Mouse)).